The chain runs to 448 residues: Methionine aminopeptidase 2 (448 aa).

The segment at 1–47 is disordered; the sequence is MTSSVDKVSQKVADVKLGSSKSTKNNKSKGKGKSNKNQVVEDDDEDD. A compositionally biased stretch (basic residues) spans 24–34; it reads KNNKSKGKGKS. H198 contacts substrate. Residues D218, D229, and H298 each contribute to the a divalent metal cation site. H306 contacts substrate. Residues E331 and E429 each coordinate a divalent metal cation.

This sequence belongs to the peptidase M24A family. Methionine aminopeptidase eukaryotic type 2 subfamily. The cofactor is Co(2+). Requires Zn(2+) as cofactor. Mn(2+) is required as a cofactor. It depends on Fe(2+) as a cofactor.

The protein resides in the cytoplasm. The catalysed reaction is Release of N-terminal amino acids, preferentially methionine, from peptides and arylamides.. Its function is as follows. Cotranslationally removes the N-terminal methionine from nascent proteins. The N-terminal methionine is often cleaved when the second residue in the primary sequence is small and uncharged (Met-Ala-, Cys, Gly, Pro, Ser, Thr, or Val). This is Methionine aminopeptidase 2 from Komagataella phaffii (strain GS115 / ATCC 20864) (Yeast).